A 343-amino-acid polypeptide reads, in one-letter code: tRNA-splicing endonuclease (343 aa).

Active-site residues include Y277, H288, and K319.

The protein belongs to the tRNA-intron endonuclease family. Archaeal long subfamily. In terms of assembly, homodimer.

The catalysed reaction is pretRNA = a 3'-half-tRNA molecule with a 5'-OH end + a 5'-half-tRNA molecule with a 2',3'-cyclic phosphate end + an intron with a 2',3'-cyclic phosphate and a 5'-hydroxyl terminus.. Its function is as follows. Endonuclease that removes tRNA introns. Cleaves pre-tRNA at the 5' and 3' splice sites to release the intron. The products are an intron and two tRNA half-molecules bearing 2',3' cyclic phosphate and 5'-OH termini. Recognizes a pseudosymmetric substrate in which 2 bulged loops of 3 bases are separated by a stem of 4 bp. The chain is tRNA-splicing endonuclease from Halobacterium salinarum (strain ATCC 29341 / DSM 671 / R1).